The following is a 510-amino-acid chain: 2-isopropylmalate synthase (510 aa).

Residues 4–266 (IQVFDTTLRD…ETNLKLDETK (263 aa)) form the Pyruvate carboxyltransferase domain. Residues Asp13, His201, His203, and Asn237 each coordinate Mn(2+). Residues 390–510 (QVETLQLQFV…DTARKDGVVS (121 aa)) are regulatory domain.

The protein belongs to the alpha-IPM synthase/homocitrate synthase family. LeuA type 1 subfamily. As to quaternary structure, homodimer. It depends on Mn(2+) as a cofactor.

It localises to the cytoplasm. It carries out the reaction 3-methyl-2-oxobutanoate + acetyl-CoA + H2O = (2S)-2-isopropylmalate + CoA + H(+). Its pathway is amino-acid biosynthesis; L-leucine biosynthesis; L-leucine from 3-methyl-2-oxobutanoate: step 1/4. In terms of biological role, catalyzes the condensation of the acetyl group of acetyl-CoA with 3-methyl-2-oxobutanoate (2-ketoisovalerate) to form 3-carboxy-3-hydroxy-4-methylpentanoate (2-isopropylmalate). The polypeptide is 2-isopropylmalate synthase (Staphylococcus carnosus (strain TM300)).